The sequence spans 426 residues: Serine--tRNA ligase (426 aa).

Position 232–234 (232–234) interacts with L-serine; it reads TAE. 263-265 provides a ligand contact to ATP; it reads RSE. Position 286 (Glu-286) interacts with L-serine. Position 350–353 (350–353) interacts with ATP; the sequence is EISS. Ser-385 is an L-serine binding site.

This sequence belongs to the class-II aminoacyl-tRNA synthetase family. Type-1 seryl-tRNA synthetase subfamily. As to quaternary structure, homodimer. The tRNA molecule binds across the dimer.

It localises to the cytoplasm. It catalyses the reaction tRNA(Ser) + L-serine + ATP = L-seryl-tRNA(Ser) + AMP + diphosphate + H(+). It carries out the reaction tRNA(Sec) + L-serine + ATP = L-seryl-tRNA(Sec) + AMP + diphosphate + H(+). Its pathway is aminoacyl-tRNA biosynthesis; selenocysteinyl-tRNA(Sec) biosynthesis; L-seryl-tRNA(Sec) from L-serine and tRNA(Sec): step 1/1. In terms of biological role, catalyzes the attachment of serine to tRNA(Ser). Is also able to aminoacylate tRNA(Sec) with serine, to form the misacylated tRNA L-seryl-tRNA(Sec), which will be further converted into selenocysteinyl-tRNA(Sec). The polypeptide is Serine--tRNA ligase (Pediococcus pentosaceus (strain ATCC 25745 / CCUG 21536 / LMG 10740 / 183-1w)).